The chain runs to 204 residues: 5'-deoxynucleotidase HDDC2 (204 aa).

An N-acetylalanine modification is found at alanine 2. A phosphoserine mark is found at serine 3 and serine 5. Positions 46-148 constitute an HD domain; the sequence is VSDHMYRMAV…VKQLDQCEMI (103 aa). 7 residues coordinate a divalent metal cation: histidine 49, histidine 77, aspartate 78, glutamate 81, aspartate 86, isoleucine 87, and aspartate 143. Serine 204 is modified (phosphoserine).

Belongs to the HDDC2 family. In terms of assembly, homodimer. The cofactor is Mn(2+). Requires Co(2+) as cofactor. Mg(2+) serves as cofactor.

The catalysed reaction is a 2'-deoxyribonucleoside 5'-phosphate + H2O = a 2'-deoxyribonucleoside + phosphate. In terms of biological role, catalyzes the dephosphorylation of the nucleoside 5'-monophosphates deoxyadenosine monophosphate (dAMP), deoxycytidine monophosphate (dCMP), deoxyguanosine monophosphate (dGMP) and deoxythymidine monophosphate (dTMP). The chain is 5'-deoxynucleotidase HDDC2 (HDDC2) from Homo sapiens (Human).